A 287-amino-acid polypeptide reads, in one-letter code: 4-hydroxybenzoate octaprenyltransferase (287 aa).

9 helical membrane passes run 22–42 (IGTY…SDGW), 45–65 (LQLL…GCVI), 95–115 (AINL…MLSW), 116–136 (STIY…FMKR), 140–160 (LPQL…FSEA), 162–182 (GEIP…TIAY), 214–234 (IGFL…ILAF), 237–257 (PYQL…LLIV), and 264–284 (CFQA…GIAI).

It belongs to the UbiA prenyltransferase family. Requires Mg(2+) as cofactor.

The protein localises to the cell inner membrane. It catalyses the reaction all-trans-octaprenyl diphosphate + 4-hydroxybenzoate = 4-hydroxy-3-(all-trans-octaprenyl)benzoate + diphosphate. Its pathway is cofactor biosynthesis; ubiquinone biosynthesis. Catalyzes the prenylation of para-hydroxybenzoate (PHB) with an all-trans polyprenyl group. Mediates the second step in the final reaction sequence of ubiquinone-8 (UQ-8) biosynthesis, which is the condensation of the polyisoprenoid side chain with PHB, generating the first membrane-bound Q intermediate 3-octaprenyl-4-hydroxybenzoate. The polypeptide is 4-hydroxybenzoate octaprenyltransferase (Colwellia psychrerythraea (strain 34H / ATCC BAA-681) (Vibrio psychroerythus)).